The chain runs to 296 residues: Glycine--tRNA ligase alpha subunit (296 aa).

The protein belongs to the class-II aminoacyl-tRNA synthetase family. In terms of assembly, tetramer of two alpha and two beta subunits.

It localises to the cytoplasm. The enzyme catalyses tRNA(Gly) + glycine + ATP = glycyl-tRNA(Gly) + AMP + diphosphate. The chain is Glycine--tRNA ligase alpha subunit from Desulfitobacterium hafniense (strain DSM 10664 / DCB-2).